A 311-amino-acid chain; its full sequence is Cytosolic Fe-S cluster assembly factor Nubp1 homolog (311 aa).

The tract at residues 1–20 is disordered; that stretch reads MQAPPPEHCPGVESENAGKG. C9, C23, C26, and C32 together coordinate [4Fe-4S] cluster. 63-70 is a binding site for ATP; sequence GKGGVGKS. 2 residues coordinate [4Fe-4S] cluster: C240 and C243.

The protein belongs to the Mrp/NBP35 ATP-binding proteins family. NUBP1/NBP35 subfamily. As to quaternary structure, heterotetramer of 2 Nubp1 and 2 Nubp2 chains. Requires [4Fe-4S] cluster as cofactor.

It localises to the cytoplasm. Its function is as follows. Component of the cytosolic iron-sulfur (Fe/S) protein assembly (CIA) machinery. Required for maturation of extramitochondrial Fe-S proteins. The Nubp1-Nubp2 heterotetramer forms a Fe-S scaffold complex, mediating the de novo assembly of an Fe-S cluster and its transfer to target apoproteins. The chain is Cytosolic Fe-S cluster assembly factor Nubp1 homolog from Drosophila simulans (Fruit fly).